We begin with the raw amino-acid sequence, 130 residues long: Small ribosomal subunit protein uS9 (130 aa).

It belongs to the universal ribosomal protein uS9 family.

The protein is Small ribosomal subunit protein uS9 of Bordetella bronchiseptica (strain ATCC BAA-588 / NCTC 13252 / RB50) (Alcaligenes bronchisepticus).